The following is a 97-amino-acid chain: C-C motif chemokine 7 (97 aa).

The first 23 residues, 1–23, serve as a signal peptide directing secretion; sequence MQISAALLCVLLTAAAFTVHVWA. At Gln-24 the chain carries Pyrrolidone carboxylic acid. An N-linked (GlcNAc...) asparagine glycan is attached at Asn-29. 2 disulfide bridges follow: Cys-33/Cys-57 and Cys-34/Cys-73.

The protein belongs to the intercrine beta (chemokine CC) family. Monomer. Interacts with TNFAIP6 (via Link domain).

Its subcellular location is the secreted. Functionally, chemotactic factor that attracts monocytes and eosinophils, but not neutrophils. Augments monocyte anti-tumor activity. In Rattus norvegicus (Rat), this protein is C-C motif chemokine 7 (Ccl7).